Reading from the N-terminus, the 348-residue chain is Ferredoxin--NADP reductase 1 (348 aa).

FAD contacts are provided by D33, K41, Y45, V85, L120, D287, and S328.

The protein belongs to the ferredoxin--NADP reductase type 2 family. As to quaternary structure, homodimer. FAD serves as cofactor.

It carries out the reaction 2 reduced [2Fe-2S]-[ferredoxin] + NADP(+) + H(+) = 2 oxidized [2Fe-2S]-[ferredoxin] + NADPH. The polypeptide is Ferredoxin--NADP reductase 1 (Oceanobacillus iheyensis (strain DSM 14371 / CIP 107618 / JCM 11309 / KCTC 3954 / HTE831)).